Here is a 1202-residue protein sequence, read N- to C-terminus: Ribonuclease P protein component, mitochondrial (1202 aa).

Residues 1–122 (MAFKSFIYSK…NNNNNQHRYY (122 aa)) constitute a mitochondrion transit peptide. Residues 109-134 (NYVNNNNNNQHRYYSTGPTLPTNQYD) form a disordered region. Polar residues predominate over residues 118–134 (QHRYYSTGPTLPTNQYD).

Consists of an RNA moiety (RPM1) and the protein component (RPM2). Both are necessary for full enzymatic activity.

It localises to the mitochondrion. It catalyses the reaction Endonucleolytic cleavage of RNA, removing 5'-extranucleotides from tRNA precursor.. In terms of biological role, ribonuclease P generates mature tRNA molecules by cleaving their 5'-ends. This is Ribonuclease P protein component, mitochondrial (RPM2) from Saccharomyces cerevisiae (strain ATCC 204508 / S288c) (Baker's yeast).